The chain runs to 207 residues: Outer-membrane lipoprotein LolB (207 aa).

An N-terminal signal peptide occupies residues 1 to 21; that stretch reads MPQPDFRLIRLLPLAALVLTA. Cys-22 is lipidated: N-palmitoyl cysteine. Cys-22 carries S-diacylglycerol cysteine lipidation.

This sequence belongs to the LolB family. As to quaternary structure, monomer.

Its subcellular location is the cell outer membrane. Its function is as follows. Plays a critical role in the incorporation of lipoproteins in the outer membrane after they are released by the LolA protein. This chain is Outer-membrane lipoprotein LolB, found in Shigella sonnei (strain Ss046).